The sequence spans 944 residues: ATP-dependent helicase fft1 (944 aa).

Disordered stretches follow at residues 89 to 109 and 174 to 246; these read AAYDPHDQPPERDVSLKESSN and SAQK…NSIP. Basic and acidic residues predominate over residues 92–108; it reads DPHDQPPERDVSLKESS. Residues 174-184 show a composition bias toward polar residues; sequence SAQKLNNQPIE. Over residues 186–203 the composition is skewed to basic and acidic residues; it reads SSVDKENAKRKRYVEEGT. The span at 217 to 227 shows a compositional bias: acidic residues; sequence LSDEETNEDDL. A compositionally biased stretch (polar residues) spans 230–246; the sequence is QSPTACTTDANIDNSIP. Positions 426-592 constitute a Helicase ATP-binding domain; it reads CLMYKAKLSG…ISLLAFMLPK (167 aa). 439 to 446 is an ATP binding site; sequence DEMGLGKT. The DEGH box signature appears at 543-546; the sequence is DEGH. One can recognise a Helicase C-terminal domain in the interval 766-923; that stretch reads KVKKLCSLLK…DSEKIQKEIS (158 aa).

It belongs to the SNF2/RAD54 helicase family.

The protein resides in the nucleus. The enzyme catalyses ATP + H2O = ADP + phosphate + H(+). Functionally, DNA helicase that possesses intrinsic ATP-dependent nucleosome-remodeling activity and is required for heterochromatin organization. In Schizosaccharomyces pombe (strain 972 / ATCC 24843) (Fission yeast), this protein is ATP-dependent helicase fft1 (fft1).